A 645-amino-acid chain; its full sequence is Acetyl-coenzyme A synthetase (645 aa).

Residues 190–193 (RGGR) and Thr308 each bind CoA. Residues 384 to 386 (GEP), 408 to 413 (DTWWQT), Asp497, and Arg512 contribute to the ATP site. Ser520 serves as a coordination point for CoA. Position 523 (Arg523) interacts with ATP. Residues Val534, His536, and Val539 each contribute to the Mg(2+) site. At Lys606 the chain carries N6-acetyllysine.

The protein belongs to the ATP-dependent AMP-binding enzyme family. Requires Mg(2+) as cofactor. In terms of processing, acetylated. Deacetylation by the SIR2-homolog deacetylase activates the enzyme.

It catalyses the reaction acetate + ATP + CoA = acetyl-CoA + AMP + diphosphate. In terms of biological role, catalyzes the conversion of acetate into acetyl-CoA (AcCoA), an essential intermediate at the junction of anabolic and catabolic pathways. AcsA undergoes a two-step reaction. In the first half reaction, AcsA combines acetate with ATP to form acetyl-adenylate (AcAMP) intermediate. In the second half reaction, it can then transfer the acetyl group from AcAMP to the sulfhydryl group of CoA, forming the product AcCoA. In Halorhodospira halophila (strain DSM 244 / SL1) (Ectothiorhodospira halophila (strain DSM 244 / SL1)), this protein is Acetyl-coenzyme A synthetase.